The chain runs to 716 residues: Radial spoke head protein 4 homolog A (716 aa).

Disordered regions lie at residues 1–164, 375–410, 506–526, and 697–716; these read MEDS…CGRR, EGED…PKSF, GEEE…FEEN, and LLAA…DDYD. Basic and acidic residues predominate over residues 8–25; that stretch reads KQEKENQEELGETRRPWE. 3 stretches are compositionally biased toward low complexity: residues 29 to 42, 54 to 66, and 80 to 100; these read AASP…SSEP, QSRS…PQSR, and SSPA…LAPA. The segment covering 140–156 has biased composition (polar residues); sequence HHTSQSEGNTFQQSQQP. The segment covering 375 to 389 has biased composition (acidic residues); sequence EGEDEEEVEEEDVAE. S396 carries the post-translational modification Phosphoserine. 2 stretches are compositionally biased toward acidic residues: residues 506 to 516 and 701 to 716; these read GEEEGEEEEEA and ENEE…DDYD.

The protein belongs to the flagellar radial spoke RSP4/6 family. Interacts with RSPH6A. Expressed in trachea, lungs, and testes. Very strong expression is detected in nasal brushings.

It localises to the cytoplasm. The protein resides in the cytoskeleton. The protein localises to the cilium axoneme. Its subcellular location is the cell projection. It is found in the cilium. Component of the axonemal radial spoke head which plays an important role in ciliary motility. Essential for triplet radial spokes (RS1, RS2 and RS3) head assembly in the motile cilia. This is Radial spoke head protein 4 homolog A (RSPH4A) from Homo sapiens (Human).